Reading from the N-terminus, the 1092-residue chain is Isoleucine--tRNA ligase (1092 aa).

The 'HIGH' region motif lies at 53 to 63; sequence PFANGLPHYGH. The 'KMSKS' region motif lies at 613–617; it reads KLSKR. K616 is an ATP binding site.

The protein belongs to the class-I aminoacyl-tRNA synthetase family. IleS type 2 subfamily. In terms of assembly, monomer. The cofactor is Zn(2+).

Its subcellular location is the cytoplasm. The catalysed reaction is tRNA(Ile) + L-isoleucine + ATP = L-isoleucyl-tRNA(Ile) + AMP + diphosphate. Its function is as follows. Catalyzes the attachment of isoleucine to tRNA(Ile). As IleRS can inadvertently accommodate and process structurally similar amino acids such as valine, to avoid such errors it has two additional distinct tRNA(Ile)-dependent editing activities. One activity is designated as 'pretransfer' editing and involves the hydrolysis of activated Val-AMP. The other activity is designated 'posttransfer' editing and involves deacylation of mischarged Val-tRNA(Ile). The chain is Isoleucine--tRNA ligase from Rickettsia conorii (strain ATCC VR-613 / Malish 7).